A 476-amino-acid chain; its full sequence is Cytosolic iron-sulfur assembly component 3 (476 aa).

Ala-2 carries the N-acetylalanine modification. Residues Cys-24, Cys-71, Cys-74, Cys-77, Cys-190, Cys-246, Cys-395, and Cys-399 each contribute to the [4Fe-4S] cluster site.

Belongs to the NARF family. External component of the CIA complex. In the CIA complex, interacts directly with CIAO1 and MMS19.

Its function is as follows. Component of the cytosolic iron-sulfur protein assembly (CIA) complex, a multiprotein complex that mediates the incorporation of iron-sulfur cluster into extramitochondrial Fe/S proteins. Seems to negatively regulate the level of HIF1A expression, although this effect could be indirect. The protein is Cytosolic iron-sulfur assembly component 3 of Rattus norvegicus (Rat).